The following is a 349-amino-acid chain: Homeobox-leucine zipper protein HOX7 (349 aa).

Positions 42-186 (RATRRDEQDD…PKQKSDLANR (145 aa)) are disordered. Composition is skewed to polar residues over residues 89-99 (SAETGSANSEM) and 121-135 (SSPSSMQEASTRQQV). The homeobox DNA-binding region spans 150–209 (GARKKLRLSKEQSSFLEDSFKEHSTLTPKQKSDLANRLNLRPRQVEVWFQNRRARTKLKQ). Residues 167-183 (DSFKEHSTLTPKQKSDL) show a composition bias toward basic and acidic residues. A leucine-zipper region spans residues 208–252 (KQTEVDCEHLKRCCERLTRENRRLQREVAELRGALRTTTSSYPPL).

The protein belongs to the HD-ZIP homeobox family. Class II subfamily. In terms of assembly, homodimer. May form a heterodimer with HOX1, HOX2 or HOX3. As to expression, expressed in seedlings, roots, leaves, nodes, internodes, flowers and embryo.

It localises to the nucleus. Its function is as follows. Probable transcription factor that binds to the DNA sequence 5'-CAAT[GC]ATTG-3'. In Oryza sativa subsp. indica (Rice), this protein is Homeobox-leucine zipper protein HOX7 (HOX7).